The following is a 434-amino-acid chain: MSVIKSIKAREILNSRGNPTVEVDLYTEKDGVVSSFRAAVPSGASTGIYEAVELRDGDKSRYLGKGVLKAIKNILEVIQPAVIGKSVSDQAAIDKLMIDLDGTPNKGKLGANAILAVSLAVCRAGAADRNLPLYKYISEIAGTKMRLPVPAFNVINGGSHAGNKLAMQEFMILPVGAKDFNEAYRMGSEVYHNLKNVISGRYGQDAINVGDEGGFAPPIQSNKEGLELLKLAIEKAGYTGLVKIGMDCAASEFKVENGYDLDFKTKNNDGSAVISGEKLGDLYREFIKEYPIISIEDPFDQDDWESYTKLTASVDIQIVGDDLLVTNPERIKTGIEKKACNALLLKVNQIGSVTESIRAALDSKNASWGVMVSHRSGETEDTFIADLVVGLGTGQIKTGAPCRSERLAKYNQLVRINEELGENHNYAGLTFRKF.

The substrate site is built by His160 and Glu169. Residue Glu212 is the Proton donor of the active site. 3 residues coordinate Mg(2+): Asp247, Glu296, and Asp321. Substrate contacts are provided by Glu296 and Asp321. Catalysis depends on Lys346, which acts as the Proton acceptor. Residues 373-376 and Lys397 each bind substrate; that span reads SHRS.

It belongs to the enolase family. In terms of assembly, homodimer. Mg(2+) is required as a cofactor.

It localises to the cytoplasm. The catalysed reaction is (2R)-2-phosphoglycerate = phosphoenolpyruvate + H2O. It participates in carbohydrate degradation; glycolysis; pyruvate from D-glyceraldehyde 3-phosphate: step 4/5. This is Enolase A (enoA) from Dictyostelium discoideum (Social amoeba).